Here is a 74-residue protein sequence, read N- to C-terminus: Exodeoxyribonuclease 7 small subunit (74 aa).

It belongs to the XseB family. As to quaternary structure, heterooligomer composed of large and small subunits.

The protein localises to the cytoplasm. The catalysed reaction is Exonucleolytic cleavage in either 5'- to 3'- or 3'- to 5'-direction to yield nucleoside 5'-phosphates.. Functionally, bidirectionally degrades single-stranded DNA into large acid-insoluble oligonucleotides, which are then degraded further into small acid-soluble oligonucleotides. The protein is Exodeoxyribonuclease 7 small subunit of Clostridium botulinum (strain Eklund 17B / Type B).